The following is a 143-amino-acid chain: Regulator of ribonuclease activity B (143 aa).

Residues 117–135 (DPDAEYDDEDGENEDDESE) show a composition bias toward acidic residues. The interval 117 to 143 (DPDAEYDDEDGENEDDESESDKSSRLH) is disordered.

The protein belongs to the RraB family. As to quaternary structure, interacts with the C-terminal region of Rne.

It localises to the cytoplasm. In terms of biological role, globally modulates RNA abundance by binding to RNase E (Rne) and regulating its endonucleolytic activity. Can modulate Rne action in a substrate-dependent manner by altering the composition of the degradosome. This is Regulator of ribonuclease activity B from Proteus mirabilis (strain HI4320).